The chain runs to 431 residues: Phosphomethylpyrimidine synthase (431 aa).

Substrate contacts are provided by residues Asn66, Met95, Tyr124, His163, 185 to 187 (SRG), 226 to 229 (DGLR), and Glu265. Residue His269 coordinates Zn(2+). Tyr292 contacts substrate. Position 333 (His333) interacts with Zn(2+). Residues Cys408, Cys411, and Cys415 each contribute to the [4Fe-4S] cluster site.

It belongs to the ThiC family. [4Fe-4S] cluster serves as cofactor.

It catalyses the reaction 5-amino-1-(5-phospho-beta-D-ribosyl)imidazole + S-adenosyl-L-methionine = 4-amino-2-methyl-5-(phosphooxymethyl)pyrimidine + CO + 5'-deoxyadenosine + formate + L-methionine + 3 H(+). It participates in cofactor biosynthesis; thiamine diphosphate biosynthesis. In terms of biological role, catalyzes the synthesis of the hydroxymethylpyrimidine phosphate (HMP-P) moiety of thiamine from aminoimidazole ribotide (AIR) in a radical S-adenosyl-L-methionine (SAM)-dependent reaction. The protein is Phosphomethylpyrimidine synthase of Dehalococcoides mccartyi (strain CBDB1).